Reading from the N-terminus, the 619-residue chain is Dihydroxy-acid dehydratase 1 (619 aa).

Asp81 contacts Mg(2+). Cys122 is a binding site for [2Fe-2S] cluster. Mg(2+)-binding residues include Asp123 and Lys124. Lys124 carries the post-translational modification N6-carboxylysine. Cys198 serves as a coordination point for [2Fe-2S] cluster. Position 494 (Glu494) interacts with Mg(2+). Ser520 functions as the Proton acceptor in the catalytic mechanism.

The protein belongs to the IlvD/Edd family. Homodimer. It depends on [2Fe-2S] cluster as a cofactor. Requires Mg(2+) as cofactor.

The enzyme catalyses (2R)-2,3-dihydroxy-3-methylbutanoate = 3-methyl-2-oxobutanoate + H2O. The catalysed reaction is (2R,3R)-2,3-dihydroxy-3-methylpentanoate = (S)-3-methyl-2-oxopentanoate + H2O. The protein operates within amino-acid biosynthesis; L-isoleucine biosynthesis; L-isoleucine from 2-oxobutanoate: step 3/4. It participates in amino-acid biosynthesis; L-valine biosynthesis; L-valine from pyruvate: step 3/4. Its function is as follows. Functions in the biosynthesis of branched-chain amino acids. Catalyzes the dehydration of (2R,3R)-2,3-dihydroxy-3-methylpentanoate (2,3-dihydroxy-3-methylvalerate) into 2-oxo-3-methylpentanoate (2-oxo-3-methylvalerate) and of (2R)-2,3-dihydroxy-3-methylbutanoate (2,3-dihydroxyisovalerate) into 2-oxo-3-methylbutanoate (2-oxoisovalerate), the penultimate precursor to L-isoleucine and L-valine, respectively. This is Dihydroxy-acid dehydratase 1 from Bordetella pertussis (strain Tohama I / ATCC BAA-589 / NCTC 13251).